Reading from the N-terminus, the 464-residue chain is Argininosuccinate lyase (464 aa).

It belongs to the lyase 1 family. Argininosuccinate lyase subfamily.

It is found in the cytoplasm. The catalysed reaction is 2-(N(omega)-L-arginino)succinate = fumarate + L-arginine. The protein operates within amino-acid biosynthesis; L-arginine biosynthesis; L-arginine from L-ornithine and carbamoyl phosphate: step 3/3. The polypeptide is Argininosuccinate lyase (Pseudomonas syringae pv. tomato (strain ATCC BAA-871 / DC3000)).